A 258-amino-acid chain; its full sequence is SMH class II histocompatibility antigen, beta-1 chain (258 aa).

A signal peptide spans 1 to 29 (MMVLPVPVAPWTAALTVLLMVLNKSVVQG). The interval 30–121 (RTTPENYLFR…LNQRLSQSLI (92 aa)) is beta-1. Topologically, residues 30–225 (RTTPENYLFR…RAQSDSARNK (196 aa)) are extracellular. Disulfide bonds link Cys44–Cys106 and Cys144–Cys200. A beta-2 region spans residues 122–215 (AQPKVHVSPS…SLDRPITVEW (94 aa)). An Ig-like C1-type domain is found at 124 to 212 (PKVHVSPSKG…EHPSLDRPIT (89 aa)). The interval 216-225 (RAQSDSARNK) is connecting peptide. N-linked (GlcNAc...) asparagine glycosylation occurs at Asn224. The helical transmembrane segment at 226-246 (TLTGVGGLVLGLIFLAVGLIM) threads the bilayer. Residues 247–258 (HVRSKKAQRGSR) lie on the Cytoplasmic side of the membrane.

The protein belongs to the MHC class II family.

The protein localises to the membrane. The sequence is that of SMH class II histocompatibility antigen, beta-1 chain from Spalax ehrenbergi (Middle East blind mole rat).